The primary structure comprises 412 residues: Imidazolonepropionase (412 aa).

The Fe(3+) site is built by His-76 and His-78. Zn(2+) contacts are provided by His-76 and His-78. Residues Arg-85, Tyr-148, and His-181 each contribute to the 4-imidazolone-5-propanoate site. Tyr-148 is a binding site for N-formimidoyl-L-glutamate. His-242 contributes to the Fe(3+) binding site. His-242 serves as a coordination point for Zn(2+). Glu-245 is a 4-imidazolone-5-propanoate binding site. Asp-317 contacts Fe(3+). Asp-317 serves as a coordination point for Zn(2+). Residues Asn-319 and Gly-321 each coordinate N-formimidoyl-L-glutamate. Ser-322 is a binding site for 4-imidazolone-5-propanoate.

This sequence belongs to the metallo-dependent hydrolases superfamily. HutI family. Zn(2+) serves as cofactor. The cofactor is Fe(3+).

The protein resides in the cytoplasm. It carries out the reaction 4-imidazolone-5-propanoate + H2O = N-formimidoyl-L-glutamate. It functions in the pathway amino-acid degradation; L-histidine degradation into L-glutamate; N-formimidoyl-L-glutamate from L-histidine: step 3/3. Its function is as follows. Catalyzes the hydrolytic cleavage of the carbon-nitrogen bond in imidazolone-5-propanoate to yield N-formimidoyl-L-glutamate. It is the third step in the universal histidine degradation pathway. This chain is Imidazolonepropionase, found in Staphylococcus aureus (strain Mu50 / ATCC 700699).